The chain runs to 89 residues: MSITAERKKELMGEFATAKGDTGSPEVQVAILSERIKNLTDHFKDHKKDNHSRRGLLALVSQRRSLLDYLKRKDDVRYQTLIEKLGLRR.

This sequence belongs to the universal ribosomal protein uS15 family. Part of the 30S ribosomal subunit. Forms a bridge to the 50S subunit in the 70S ribosome, contacting the 23S rRNA.

One of the primary rRNA binding proteins, it binds directly to 16S rRNA where it helps nucleate assembly of the platform of the 30S subunit by binding and bridging several RNA helices of the 16S rRNA. In terms of biological role, forms an intersubunit bridge (bridge B4) with the 23S rRNA of the 50S subunit in the ribosome. This chain is Small ribosomal subunit protein uS15, found in Mesorhizobium japonicum (strain LMG 29417 / CECT 9101 / MAFF 303099) (Mesorhizobium loti (strain MAFF 303099)).